An 852-amino-acid chain; its full sequence is Pentatricopeptide repeat-containing protein At5g02830, chloroplastic (852 aa).

A chloroplast-targeting transit peptide spans 1-25 (MRDFVIVFGSSSAITNPHHHHRRCY). The interval 17–60 (PHHHHRRCYATAPESNRKTKSNSSFTKLLPSLPQQHSPSPASVS) is disordered. A compositionally biased stretch (low complexity) spans 44 to 58 (LLPSLPQQHSPSPAS). PPR repeat units follow at residues 334-364 (DMTS…AKRM), 373-407 (DAFT…GVTP), 408-442 (NTHT…GCEP), 443-477 (NSQC…SVNE), 525-557 (TTAT…GLSP), 558-592 (NQIT…GTRP), 593-627 (DVVA…QIKP), and 628-665 (NWVT…GYKP).

This sequence belongs to the PPR family. P subfamily.

It is found in the plastid. The protein resides in the chloroplast. The chain is Pentatricopeptide repeat-containing protein At5g02830, chloroplastic from Arabidopsis thaliana (Mouse-ear cress).